We begin with the raw amino-acid sequence, 276 residues long: MSAPTDQPPRSEGAQTNSSERSSQQQEQPQQSQSQNVPAKLLQHFQTNRIDSALWALRLLVIFFTVSYVLPIFTSQQSAFSKVMLANAAISALRLHQRLPAFAFSREFLARLFAEDSCHYMMYSLIFFNIRPSLLVLIPVLLYSVLHASSYSLKLLDLIGQNSWWGARFIISIVEFQAANILKATAFCEIFIMPYAIVLAFMNHAGLMTPVIYYHYLVMRYSSRRNPYPRNAFAELRITFEALAARSPPAFAKIIRGGIGFVNRLAPQLQPAAAQE.

The disordered stretch occupies residues 1-37; it reads MSAPTDQPPRSEGAQTNSSERSSQQQEQPQQSQSQNV. Positions 18–35 are enriched in low complexity; it reads SSERSSQQQEQPQQSQSQ. Position 22 is a phosphoserine (Ser-22). The next 3 helical transmembrane spans lie at 53–73, 125–145, and 181–201; these read ALWALRLLVIFFTVSYVLPIF, LIFFNIRPSLLVLIPVLLYSV, and ILKATAFCEIFIMPYAIVLAF.

This sequence belongs to the PER33/POM33 family.

It is found in the membrane. Its function is as follows. Member of the dosage-dependent hierarchy effective upon white gene expression. The chain is Krueppel homolog 2 (Kr-h2) from Drosophila melanogaster (Fruit fly).